The primary structure comprises 621 residues: MQHADALYLFNEGRNNQAYRLLGAHADISGTTFRVWAPNASRVSVVGDFNGWHGDVHQLHPLGESGVWEIAVAEAHTGNLYRFEITNRHTGDKLIKSDPYGRGFELRPGSAAYVVPPSMHVWGDADWLQQRAGWDWQQAPVNIYEVHPGSWMRHPDGKPYLWGELAERLIPYALAQGYTHLELLPITEHPLDESWGYQTTGYFAPTSRYGSADELRAFVDACHQAGLGVLLDWVPGHFPQDDWALARFDGTALYEHEDPRLGLHADWGTHIFNYGRHEVRSFLMSSAHWWLSEFHFDGLRVDAVASMLYLDYSRKHGEWLPNKFGGRENLEAIDFLKQLNAMVHGDFPGALTIAEESTAWPMVSRPTYVGGLGFSMKWNMGWMNDSLRYFHRDPIYRRWHHSELTFGQIYAYSENYVLPFSHDEVVHGKGSLLGKMPGDTWQRYANLRLLLAWQVLTPGKKLMFMGCEFGQQGEWSEGRELDWGSLANPENAAAQRLSADLNRLYRDLPALHTQDFSALGFEWIDCNDSEHSVLSWLRWGKDGSFVVVVFNFTPVPQPAYRLGVPEAGTYVELLNTDSAFYGGSNLGNGGALTATKGEWMGRPANLEVTIPPLGAVVLRRE.

Asp-302 (nucleophile) is an active-site residue. Glu-355 serves as the catalytic Proton donor.

This sequence belongs to the glycosyl hydrolase 13 family. GlgB subfamily. Monomer.

It carries out the reaction Transfers a segment of a (1-&gt;4)-alpha-D-glucan chain to a primary hydroxy group in a similar glucan chain.. It functions in the pathway glycan biosynthesis; glycogen biosynthesis. Functionally, catalyzes the formation of the alpha-1,6-glucosidic linkages in glycogen by scission of a 1,4-alpha-linked oligosaccharide from growing alpha-1,4-glucan chains and the subsequent attachment of the oligosaccharide to the alpha-1,6 position. The protein is 1,4-alpha-glucan branching enzyme GlgB of Dechloromonas aromatica (strain RCB).